The chain runs to 1427 residues: DNA-directed RNA polymerase subunit beta' (1427 aa).

The Zn(2+) site is built by Cys70, Cys72, Cys85, and Cys88. Residues Asp461, Asp463, and Asp465 each contribute to the Mg(2+) site. The Zn(2+) site is built by Cys809, Cys882, Cys889, and Cys892. The tract at residues 1394–1427 (EAAIGDDPLGKVQGEDFTTDDVMVEERPEGASEE) is disordered. A compositionally biased stretch (basic and acidic residues) spans 1417 to 1427 (VEERPEGASEE).

The protein belongs to the RNA polymerase beta' chain family. As to quaternary structure, the RNAP catalytic core consists of 2 alpha, 1 beta, 1 beta' and 1 omega subunit. When a sigma factor is associated with the core the holoenzyme is formed, which can initiate transcription. It depends on Mg(2+) as a cofactor. The cofactor is Zn(2+).

It carries out the reaction RNA(n) + a ribonucleoside 5'-triphosphate = RNA(n+1) + diphosphate. DNA-dependent RNA polymerase catalyzes the transcription of DNA into RNA using the four ribonucleoside triphosphates as substrates. In Sphingopyxis alaskensis (strain DSM 13593 / LMG 18877 / RB2256) (Sphingomonas alaskensis), this protein is DNA-directed RNA polymerase subunit beta'.